The sequence spans 125 residues: Basic leucine zipper transcriptional factor ATF-like (125 aa).

Low complexity predominate over residues 1 to 14; the sequence is MPHSSDSSDSSFSR. Residues 1–59 are disordered; it reads MPHSSDSSDSSFSRSPPPGKQDSSDDVRKVQRREKNRIAAQKSRQRQTQKADTLHLESE. The 64-residue stretch at 26-89 folds into the bZIP domain; it reads DVRKVQRREK…KYFTSVLSSH (64 aa). The basic motif stretch occupies residues 28–50; the sequence is RKVQRREKNRIAAQKSRQRQTQK. Ser-43 carries the post-translational modification Phosphoserine. Thr-48 is modified (phosphothreonine). A leucine-zipper region spans residues 54–75; sequence LHLESEDLEKQNAALRKEIKQL.

It belongs to the bZIP family. In terms of assembly, heterodimer; mainly heterodimerizes with JUNB. The BATF-JUNB heterodimer interacts with IRF4 and IRF8. Interacts (via bZIP domain) with IRF4 and IRF8; the interaction is direct. Also forms heterodimers with JUN and JUND. Interacts with IFI35. Post-translationally, phosphorylated on serine and threonine residues and at least one tyrosine residue. Phosphorylation at Ser-43 inhibit DNA binding activity and transforms it as a negative regulator of AP-1 mediated transcription. Detected in postnatal and adult lymphoid tissues such as thymus, spleen and lymph nodes. In thymus most concentrated expression is found in the immediate cortical layer. Differentially expressed during T-cell development in thymus. Highly expressed in Th17, Th1 and Th2 cells and in activated B-cells.

It is found in the nucleus. Its subcellular location is the cytoplasm. Its function is as follows. AP-1 family transcription factor that controls the differentiation of lineage-specific cells in the immune system: specifically mediates the differentiation of T-helper 17 cells (Th17), follicular T-helper cells (TfH), CD8(+) dendritic cells and class-switch recombination (CSR) in B-cells. Acts via the formation of a heterodimer with JUNB that recognizes and binds DNA sequence 5'-TGA[CG]TCA-3'. The BATF-JUNB heterodimer also forms a complex with IRF4 (or IRF8) in immune cells, leading to recognition of AICE sequence (5'-TGAnTCA/GAAA-3'), an immune-specific regulatory element, followed by cooperative binding of BATF and IRF4 (or IRF8) and activation of genes. Controls differentiation of T-helper cells producing interleukin-17 (Th17 cells) by binding to Th17-associated gene promoters: regulates expression of the transcription factor RORC itself and RORC target genes such as IL17 (IL17A or IL17B). Also involved in differentiation of follicular T-helper cells (TfH) by directing expression of BCL6 and MAF. In B-cells, involved in class-switch recombination (CSR) by controlling the expression of both AICDA and of germline transcripts of the intervening heavy-chain region and constant heavy-chain region (I(H)-C(H)). Following infection, can participate in CD8(+) dendritic cell differentiation via interaction with IRF4 and IRF8 to mediate cooperative gene activation. Regulates effector CD8(+) T-cell differentiation by regulating expression of SIRT1. Following DNA damage, part of a differentiation checkpoint that limits self-renewal of hematopoietic stem cells (HSCs): up-regulated by STAT3, leading to differentiation of HSCs, thereby restricting self-renewal of HSCs. In Mus musculus (Mouse), this protein is Basic leucine zipper transcriptional factor ATF-like (Batf).